We begin with the raw amino-acid sequence, 385 residues long: Probable splicing factor YJU2B (385 aa).

The interval 1 to 26 is disordered; sequence MGERKGQNKYYPPDFNPEKHGSLNRY. Ser40 bears the Phosphoserine mark. Residues 182–215 are a coiled coil; the sequence is LNSMLRRHFREKKKAMQEEEEKDQALQAKANLAI. A disordered region spans residues 256-385; that stretch reads FPSAQGPSTS…VADYSDSESE (130 aa). Residues 260-270 show a composition bias toward polar residues; sequence QGPSTSSSKAS. Position 306 is a phosphoserine (Ser306). 2 stretches are compositionally biased toward polar residues: residues 307 to 316 and 359 to 373; these read PQCTADNSLS and GSSQEDLLHPNTPNA.

It belongs to the CWC16 family.

The protein resides in the nucleus. May be involved in mRNA splicing. The sequence is that of Probable splicing factor YJU2B from Rattus norvegicus (Rat).